A 346-amino-acid chain; its full sequence is Histone PARylation factor 1 (346 aa).

Met-1 carries the N-acetylmethionine modification. A compositionally biased stretch (basic residues) spans Met-1–Leu-10. The tract at residues Met-1 to Cys-29 is disordered. The residue at position 19 (Lys-19) is an N6-acetyllysine. The segment covering Lys-19–Cys-29 has biased composition (basic and acidic residues). Ser-97 is subject to ADP-ribosylserine. Lys-186 and Lys-233 each carry N6-acetyllysine. PolyADP-ribosyl aspartic acid is present on Asp-235. At Tyr-238 the chain carries ADP-ribosyltyrosine. Glu-240 is subject to PolyADP-ribosyl glutamic acid. Positions Pro-242–Ala-346 are interaction with PARP1. Glu-284 (proton donor) is an active-site residue.

Belongs to the HPF1 family. As to quaternary structure, interacts with PARP1 (via the PARP catalytic domain). Interacts with PARP2 (via the PARP catalytic domain). Interacts with core nucleosomes in a PARP1- and PARP2-dependent manner.

The protein localises to the chromosome. It is found in the nucleus. Functionally, cofactor for serine ADP-ribosylation that confers serine specificity on PARP1 and PARP2 and plays a key role in DNA damage response. Initiates the repair of double-strand DNA breaks: recruited to DNA damage sites by PARP1 and PARP2 and switches the amino acid specificity of PARP1 and PARP2 from aspartate or glutamate to serine residues, licensing serine ADP-ribosylation of target proteins. Serine ADP-ribosylation of target proteins, such as histones, promotes decompaction of chromatin and the recruitment of repair factors leading to the reparation of DNA strand breaks. Serine ADP-ribosylation of proteins constitutes the primary form of ADP-ribosylation of proteins in response to DNA damage. HPF1 acts by completing the active site of PARP1 and PARP2: forms a composite active site composed of residues from HPF1 and PARP1 or PARP2. While HPF1 promotes the initiation of serine ADP-ribosylation, it restricts the polymerase activity of PARP1 and PARP2 in order to limit the length of poly-ADP-ribose chains. HPF1 also promotes tyrosine ADP-ribosylation, probably by conferring tyrosine specificity on PARP1. The polypeptide is Histone PARylation factor 1 (Bos taurus (Bovine)).